Here is a 250-residue protein sequence, read N- to C-terminus: MGPPMKIEDVRRTAYSMPLTNPAFPPGPYRFFDREYFIITYRTDPEALATIVPEPLEVAEPLVKYEFIRMPDSTGFGDYTETGQVIPVRFKGEEGGYTHAMYLDDEAPIAGGRELWGFPKKLARPKIEVESDVLVGSLHYGSVLCASATMGYKHHKVDHDTVLKSMASPNFILKIIPHVDGSPRICELVRFHLDDVVLKEAWTGPAALGLFPHALCDVARLPVREVISALHFKADLTLGLGSVAFDYMAK.

The active-site Schiff-base intermediate with acetoacetate is the lysine 120.

The protein belongs to the ADC family.

The catalysed reaction is acetoacetate + H(+) = acetone + CO2. Catalyzes the conversion of acetoacetate to acetone and carbon dioxide. In Bradyrhizobium diazoefficiens (strain JCM 10833 / BCRC 13528 / IAM 13628 / NBRC 14792 / USDA 110), this protein is Acetoacetate decarboxylase 1.